Consider the following 442-residue polypeptide: GTPase Obg (442 aa).

Residues 1–158 (MFYDQARIFV…HWLELELKLL (158 aa)) enclose the Obg domain. The OBG-type G domain occupies 159 to 329 (ADVGLVGFPN…LIYHVHKGLE (171 aa)). Residues 165–172 (GFPNVGKS), 190–194 (FTTLE), 212–215 (DIPG), 282–285 (NKMD), and 310–312 (SAA) each bind GTP. Ser-172 and Thr-192 together coordinate Mg(2+). The 79-residue stretch at 349–427 (FTGKTEERFK…IGDLDFDFIE (79 aa)) folds into the OCT domain.

It belongs to the TRAFAC class OBG-HflX-like GTPase superfamily. OBG GTPase family. As to quaternary structure, monomer. Requires Mg(2+) as cofactor.

Its subcellular location is the cytoplasm. An essential GTPase which binds GTP, GDP and possibly (p)ppGpp with moderate affinity, with high nucleotide exchange rates and a fairly low GTP hydrolysis rate. Plays a role in control of the cell cycle, stress response, ribosome biogenesis and in those bacteria that undergo differentiation, in morphogenesis control. This chain is GTPase Obg, found in Heliobacterium modesticaldum (strain ATCC 51547 / Ice1).